The sequence spans 447 residues: Keratin, type I cytoskeletal 15 (447 aa).

A head region spans residues 1-93 (MATTFLQTSS…GGDGGLLSGN (93 aa)). Phosphoserine is present on residues serine 16, serine 28, serine 33, and serine 47. The interval 94–129 (EKVTMQNLNDRLASYLDKVRALEEANTELEVKIRDW) is coil 1A. The 313-residue stretch at 94-406 (EKVTMQNLND…NLLEGQDAKM (313 aa)) folds into the IF rod domain. Phosphothreonine is present on threonine 120. The interval 130-148 (YQKQSPASPDRDYSHYFKT) is linker 1. The interval 149-240 (MEEIRDKILA…KNHEEEMKEF (92 aa)) is coil 1B. Residues 241–260 (SSQLAGQVNVEMDAAPGVDL) are linker 12. Residues 261 to 402 (TRMLAEMREQ…STYRNLLEGQ (142 aa)) form a coil 2 region. A Glycyl lysine isopeptide (Lys-Gly) (interchain with G-Cter in SUMO2) cross-link involves residue lysine 289. Residues threonine 290 and threonine 312 each carry the phosphothreonine modification. The tail stretch occupies residues 403–447 (DAKMAAIGVREASLRGGSSGGGSNFHISVEESVDGKVVSSRKRES). A Glycyl lysine isopeptide (Lys-Gly) (interchain with G-Cter in SUMO1); alternate cross-link involves residue lysine 438. Residue lysine 438 forms a Glycyl lysine isopeptide (Lys-Gly) (interchain with G-Cter in SUMO2); alternate linkage.

The protein belongs to the intermediate filament family. As to quaternary structure, heterotetramer of two type I and two type II keratins. Forms a heterodimer with KRT14. Interacts with NOD2.

The chain is Keratin, type I cytoskeletal 15 from Rattus norvegicus (Rat).